Consider the following 130-residue polypeptide: MARVKRAVNAQKKRRVVLERASGYRGQRSRLYRKAKEQVTHSLVYSYNDRRKNKGNFRKLWIQRINAAARAQGMTYNRFIQGLNLAGVEVDRKILADLAVNDVTAFNALVETAKAALPADVNAPKAEASA.

It belongs to the bacterial ribosomal protein bL20 family.

In terms of biological role, binds directly to 23S ribosomal RNA and is necessary for the in vitro assembly process of the 50S ribosomal subunit. It is not involved in the protein synthesizing functions of that subunit. The polypeptide is Large ribosomal subunit protein bL20 (Nocardioides sp. (strain ATCC BAA-499 / JS614)).